The primary structure comprises 138 residues: Large ribosomal subunit protein uL16c (138 aa).

It belongs to the universal ribosomal protein uL16 family. Part of the 50S ribosomal subunit.

It is found in the plastid. The protein resides in the chloroplast. This chain is Large ribosomal subunit protein uL16c, found in Chaetosphaeridium globosum (Charophycean green alga).